A 101-amino-acid polypeptide reads, in one-letter code: Small ribosomal subunit protein uS14c (101 aa).

This sequence belongs to the universal ribosomal protein uS14 family. In terms of assembly, part of the 30S ribosomal subunit.

Its subcellular location is the plastid. Binds 16S rRNA, required for the assembly of 30S particles. The protein is Small ribosomal subunit protein uS14c of Helicosporidium sp. subsp. Simulium jonesii (Green alga).